The sequence spans 185 residues: Peptidyl-tRNA hydrolase (185 aa).

A tRNA-binding site is contributed by tyrosine 14. Histidine 19 acts as the Proton acceptor in catalysis. The tRNA site is built by tyrosine 65, asparagine 67, and asparagine 113.

This sequence belongs to the PTH family. As to quaternary structure, monomer.

It localises to the cytoplasm. It carries out the reaction an N-acyl-L-alpha-aminoacyl-tRNA + H2O = an N-acyl-L-amino acid + a tRNA + H(+). Functionally, hydrolyzes ribosome-free peptidyl-tRNAs (with 1 or more amino acids incorporated), which drop off the ribosome during protein synthesis, or as a result of ribosome stalling. Catalyzes the release of premature peptidyl moieties from peptidyl-tRNA molecules trapped in stalled 50S ribosomal subunits, and thus maintains levels of free tRNAs and 50S ribosomes. The sequence is that of Peptidyl-tRNA hydrolase from Rickettsia akari (strain Hartford).